The primary structure comprises 259 residues: MNWLEAFILGIIQGLTEFLPISSTGHLYLGRHLFQLDEAGLFLDTMLHIGTLLAVFIYYKKEFIYLIKNPFSKLMLLLIVGTIPAVVIGLLFKDFFEDISKTGITIGWEFLVTGFFLYMADKQKNGRKKMDDITYKDAFIIGSFQAAAIFPAISRSGMTIVAALWRKLDRETAAYFSFLLSTPAIVGAIILQFADVFQGKAESISNTSLIVGTLSAAFFGYIAVSWMIQYLKRHSLKVFAYYVWGLGIIIITLQYTHVF.

Helical transmembrane passes span 1–21 (MNWL…FLPI), 39–59 (AGLF…FIYY), 71–91 (FSKL…IGLL), 99–119 (ISKT…FLYM), 133–153 (ITYK…FPAI), 173–193 (AAYF…ILQF), 208–228 (SLIV…SWMI), and 239–259 (FAYY…THVF).

This sequence belongs to the UppP family.

It is found in the cell membrane. The catalysed reaction is di-trans,octa-cis-undecaprenyl diphosphate + H2O = di-trans,octa-cis-undecaprenyl phosphate + phosphate + H(+). Functionally, catalyzes the dephosphorylation of undecaprenyl diphosphate (UPP). Confers resistance to bacitracin. The protein is Undecaprenyl-diphosphatase 4 of Bacillus thuringiensis (strain Al Hakam).